Reading from the N-terminus, the 179-residue chain is Large ribosomal subunit protein uL5 (179 aa).

It belongs to the universal ribosomal protein uL5 family. In terms of assembly, part of the 50S ribosomal subunit; part of the 5S rRNA/L5/L18/L25 subcomplex. Contacts the 5S rRNA and the P site tRNA. Forms a bridge to the 30S subunit in the 70S ribosome.

Functionally, this is one of the proteins that bind and probably mediate the attachment of the 5S RNA into the large ribosomal subunit, where it forms part of the central protuberance. In the 70S ribosome it contacts protein S13 of the 30S subunit (bridge B1b), connecting the 2 subunits; this bridge is implicated in subunit movement. Contacts the P site tRNA; the 5S rRNA and some of its associated proteins might help stabilize positioning of ribosome-bound tRNAs. The sequence is that of Large ribosomal subunit protein uL5 from Vibrio parahaemolyticus serotype O3:K6 (strain RIMD 2210633).